A 360-amino-acid polypeptide reads, in one-letter code: C-X-C chemokine receptor type 2 (360 aa).

Residues 1–48 (MEDFNMESDSFEDFWKGEDLSNYSYSSTLPPFLLDAAPCEPESLEINK) lie on the Extracellular side of the membrane. A glycan (N-linked (GlcNAc...) asparagine) is linked at Asn22. The chain crosses the membrane as a helical span at residues 49–75 (YFVVIIYALVFLLSLLGNSLVMLVILY). Residues 76–84 (SRVGRSVTD) are Cytoplasmic-facing. Residues 85–105 (VYLLNLALADLLFALTLPIWA) traverse the membrane as a helical segment. Over 106 to 120 (ASKVNGWIFGTFLCK) the chain is Extracellular. Cysteines 119 and 196 form a disulfide. The chain crosses the membrane as a helical span at residues 121 to 142 (VVSLLKEVNFYSGILLLACISV). Residues 143–163 (DRYLAIVHATRTLTQKRYLVK) are Cytoplasmic-facing. Residues 164–183 (FICLSIWGLSLLLALPVLLF) form a helical membrane-spanning segment. The Extracellular portion of the chain corresponds to 184–208 (RRTVYSSNVSPACYEDMGNNTANWR). The helical transmembrane segment at 209-231 (MLLRILPQSFGFIVPLLIMLFCY) threads the bilayer. The Cytoplasmic portion of the chain corresponds to 232-251 (GFTLRTLFKAHMGQKHRAMR). A helical membrane pass occupies residues 252–273 (VIFAVVLIFLLCWLPYNLVLLA). The Extracellular segment spans residues 274 to 294 (DTLMRTQVIQETCERRNHIDR). Residues 295–315 (ALDATEILGILHSCLNPLIYA) form a helical membrane-spanning segment. The Cytoplasmic segment spans residues 316–360 (FIGQKFRHGLLKILAIHGLISKDSLPKDSRPSFVGSSSGHTSTTL). Phosphoserine is present on residues Ser347, Ser351, Ser352, and Ser353.

It belongs to the G-protein coupled receptor 1 family. In terms of assembly, interacts with IL8. Interacts with GNAI2. Post-translationally, phosphorylated upon ligand binding; which is required for desensitization. (Microbial infection) Proteolytically cleaved by Staphylococcus aureus staphopain A/SspP. This cleavage inhibits CXCR2-dependent neutrophil activation and chemotaxis.

It localises to the cell membrane. Receptor for interleukin-8 which is a powerful neutrophil chemotactic factor. Binding of IL-8 to the receptor causes activation of neutrophils. This response is mediated via a G-protein that activates a phosphatidylinositol-calcium second messenger system. Binds to IL-8 with high affinity. Also binds with high affinity to CXCL3, GRO/MGSA and NAP-2. The chain is C-X-C chemokine receptor type 2 (CXCR2) from Homo sapiens (Human).